Here is a 281-residue protein sequence, read N- to C-terminus: 32 kDa heat shock protein (281 aa).

Residues 142–168 are compositionally biased toward acidic residues; it reads EDDEEIDSDEEFGDSDQDEEDSDDEEI. The disordered stretch occupies residues 142 to 281; the sequence is EDDEEIDSDE…NENNKKKQKN (140 aa). A compositionally biased stretch (basic and acidic residues) spans 180–209; that stretch reads KITEISEVPESKKEKTPEPKKVPEPKKEQV. Positions 210 to 273 are enriched in low complexity; it reads KQPTQPQQKK…NNKRPQNQNE (64 aa).

This is 32 kDa heat shock protein (hspC) from Dictyostelium discoideum (Social amoeba).